Reading from the N-terminus, the 234-residue chain is Bradykinin-releasing enzyme KR-E-1 (234 aa).

A Peptidase S1 domain is found at 1 to 225 (VIGGDECNIN…YSDWIQSIIA (225 aa)). Disulfide bonds link cysteine 7/cysteine 139, cysteine 26/cysteine 42, cysteine 74/cysteine 232, cysteine 118/cysteine 186, cysteine 150/cysteine 165, and cysteine 176/cysteine 201. A glycan (N-linked (GlcNAc...) asparagine) is linked at asparagine 20. Catalysis depends on charge relay system residues histidine 41 and aspartate 86. Residue serine 180 is the Charge relay system of the active site.

Belongs to the peptidase S1 family. Snake venom subfamily. In terms of assembly, monomer. Expressed by the venom gland.

Its subcellular location is the secreted. Its function is as follows. Bradykinin-releasing enzyme. Releases bradykinin from bovine HMW kininogen. Has anticoagulant activity. Increases permeability of capillaries by intradermal injection into rabbits. The polypeptide is Bradykinin-releasing enzyme KR-E-1 (Gloydius ussuriensis (Ussuri mamushi)).